Reading from the N-terminus, the 207-residue chain is Thiamine-phosphate synthase (207 aa).

4-amino-2-methyl-5-(diphosphooxymethyl)pyrimidine-binding positions include 36–40 (QLRMK) and Asn-68. Asp-69 and Asp-88 together coordinate Mg(2+). Ser-106 is a 4-amino-2-methyl-5-(diphosphooxymethyl)pyrimidine binding site. Residue 132–134 (TNT) participates in 2-[(2R,5Z)-2-carboxy-4-methylthiazol-5(2H)-ylidene]ethyl phosphate binding. Residue Lys-135 coordinates 4-amino-2-methyl-5-(diphosphooxymethyl)pyrimidine. Residues Gly-162 and 182–183 (VS) each bind 2-[(2R,5Z)-2-carboxy-4-methylthiazol-5(2H)-ylidene]ethyl phosphate.

It belongs to the thiamine-phosphate synthase family. The cofactor is Mg(2+).

The enzyme catalyses 2-[(2R,5Z)-2-carboxy-4-methylthiazol-5(2H)-ylidene]ethyl phosphate + 4-amino-2-methyl-5-(diphosphooxymethyl)pyrimidine + 2 H(+) = thiamine phosphate + CO2 + diphosphate. It carries out the reaction 2-(2-carboxy-4-methylthiazol-5-yl)ethyl phosphate + 4-amino-2-methyl-5-(diphosphooxymethyl)pyrimidine + 2 H(+) = thiamine phosphate + CO2 + diphosphate. It catalyses the reaction 4-methyl-5-(2-phosphooxyethyl)-thiazole + 4-amino-2-methyl-5-(diphosphooxymethyl)pyrimidine + H(+) = thiamine phosphate + diphosphate. It functions in the pathway cofactor biosynthesis; thiamine diphosphate biosynthesis; thiamine phosphate from 4-amino-2-methyl-5-diphosphomethylpyrimidine and 4-methyl-5-(2-phosphoethyl)-thiazole: step 1/1. Its function is as follows. Condenses 4-methyl-5-(beta-hydroxyethyl)thiazole monophosphate (THZ-P) and 2-methyl-4-amino-5-hydroxymethyl pyrimidine pyrophosphate (HMP-PP) to form thiamine monophosphate (TMP). This chain is Thiamine-phosphate synthase, found in Methanococcus maripaludis (strain C7 / ATCC BAA-1331).